We begin with the raw amino-acid sequence, 176 residues long: MPVKRSLKLDDQFEKNSFSPSKIVRKKSITAYSPTTGTYQLSPFSSPATPKEQEHRNGPSNETRKRSNLSSPVRQESTVKDRDGFMVLLSKIEISSEKTMEIMKNLSSIQALEGNRQLEDLIGVSLVPCSLKSEARKTKELMTKVIKQKLFEKKKSRITPKDHHLDSFEFLKAILN.

K8 is covalently cross-linked (Glycyl lysine isopeptide (Lys-Gly) (interchain with G-Cter in SUMO2)). S17 carries the phosphoserine modification. A DD1 region spans residues 20–50 (PSKIVRKKSITAYSPTTGTYQLSPFSSPATP). K22 participates in a covalent cross-link: Glycyl lysine isopeptide (Lys-Gly) (interchain with G-Cter in SUMO2). S28 is subject to Phosphoserine. The span at 34-48 (PTTGTYQLSPFSSPA) shows a compositional bias: polar residues. The disordered stretch occupies residues 34 to 78 (PTTGTYQLSPFSSPATPKEQEHRNGPSNETRKRSNLSSPVRQEST). Over residues 51 to 65 (KEQEHRNGPSNETRK) the composition is skewed to basic and acidic residues. A Nuclear localization signal motif is present at residues 63–66 (TRKR). S71 carries the post-translational modification Phosphoserine. Residues 82–112 (RDGFMVLLSKIEISSEKTMEIMKNLSSIQAL) adopt a coiled-coil conformation. The LXXIL motif motif lies at 171 to 175 (LKAIL).

Homodimer; mediated by the coiled coil domain. Interacts with CCNA2 and MTA1. Interacts with NFKB1 NF-kappa-B subunit. Component of the CENPA-CAD complex, composed of CENPI, CENPK, CENPL, CENPO, CENPP, CENPQ, CENPR and CENPS. The CENPA-CAD complex interacts with the CENPA-NAC complex, at least composed of CENPA, CENPC, CENPH, CENPM, CENPN, CENPT and CENPU. Interacts with TASOR. Expressed in the spermatogonia and spermatocytes.

It is found in the nucleus. It localises to the chromosome. The protein localises to the centromere. The protein resides in the kinetochore. In terms of biological role, transcription coregulator that can have both coactivator and corepressor functions. Involved in the coactivation of nuclear receptors for retinoid X (RXRs) and thyroid hormone (TRs) in a ligand-dependent fashion. In contrast, it does not coactivate nuclear receptors for retinoic acid, vitamin D, progesterone receptor, nor glucocorticoid. Acts as a coactivator for estrogen receptor alpha. Acts as a transcriptional corepressor via its interaction with the NFKB1 NF-kappa-B subunit, possibly by interfering with the transactivation domain of NFKB1. Induces apoptosis in breast cancer cells, but not in other cancer cells, via a caspase-2 mediated pathway that involves mitochondrial membrane permeabilization but does not require other caspases. May also act as an inhibitor of cyclin A-associated kinase. Also acts a component of the CENPA-CAD (nucleosome distal) complex, a complex recruited to centromeres which is involved in assembly of kinetochore proteins, mitotic progression and chromosome segregation. May be involved in incorporation of newly synthesized CENPA into centromeres via its interaction with the CENPA-NAC complex. The protein is Centromere protein R (Itgb3bp) of Mus musculus (Mouse).